Reading from the N-terminus, the 296-residue chain is MFGFLNLHKPLHLTSHDCVAKVRRLLRQKRVGHGGTLDPLAEGVLPLAVGSATRLLPYLPGAKQYQALIRFGVRTDSDDLAGEVLESKNVSYLTLAAVEQILPTFLGEIEQIPPQYSAIQVNGKRLYELARAGIPQAVPSRMVTINDLKILGWRSGNQPELDLQVTCGEGTYIRALARDLGDRLGTGATLAGLVRQQSGGMALDNSVGLTALEKIVAEEEHIPLIPPQEALSHLPTVQLNSELEKRWFHGQRLLLPDLPVGVVLITSELGPVKCLGVALVTPEDHGTVLRPKVVLN.

The active-site Nucleophile is the D38.

Belongs to the pseudouridine synthase TruB family. Type 1 subfamily.

It catalyses the reaction uridine(55) in tRNA = pseudouridine(55) in tRNA. Responsible for synthesis of pseudouridine from uracil-55 in the psi GC loop of transfer RNAs. The polypeptide is tRNA pseudouridine synthase B (Synechocystis sp. (strain ATCC 27184 / PCC 6803 / Kazusa)).